The following is a 316-amino-acid chain: Beta-ketoacyl-[acyl-carrier-protein] synthase III 1 (316 aa).

Catalysis depends on residues cysteine 112 and histidine 243. Residues glutamine 244–arginine 248 form an ACP-binding region. Asparagine 273 is a catalytic residue.

It belongs to the thiolase-like superfamily. FabH family. Homodimer.

The protein localises to the cytoplasm. It catalyses the reaction malonyl-[ACP] + acetyl-CoA + H(+) = 3-oxobutanoyl-[ACP] + CO2 + CoA. It participates in lipid metabolism; fatty acid biosynthesis. In terms of biological role, catalyzes the condensation reaction of fatty acid synthesis by the addition to an acyl acceptor of two carbons from malonyl-ACP. Catalyzes the first condensation reaction which initiates fatty acid synthesis and may therefore play a role in governing the total rate of fatty acid production. Possesses both acetoacetyl-ACP synthase and acetyl transacylase activities. Its substrate specificity determines the biosynthesis of branched-chain and/or straight-chain of fatty acids. The polypeptide is Beta-ketoacyl-[acyl-carrier-protein] synthase III 1 (Vibrio cholerae serotype O1 (strain ATCC 39315 / El Tor Inaba N16961)).